Reading from the N-terminus, the 132-residue chain is uncharacterized protein (132 aa).

The disordered stretch occupies residues Trp-68–Ser-91.

This is an uncharacterized protein from Streptomyces cacaoi.